Here is a 1038-residue protein sequence, read N- to C-terminus: Subtilisin-like protease SBT6.1 (1038 aa).

A signal peptide spans 1–30 (MKVLGEASSYPYRSCIIVVFLSVSLFWLRP). The propeptide at 31–181 (STYHPQQQNL…TTLNWSRHLL (151 aa)) is removed in mature form. 4 N-linked (GlcNAc...) asparagine glycosylation sites follow: Asn-44, Asn-52, Asn-171, and Asn-175. The region spanning 175–473 (NWSRHLLAQK…VDLLESYEIL (299 aa)) is the Peptidase S8 domain. The Lumenal segment spans residues 182-1000 (AQKTQVTSMF…IDMPFLVPTR (819 aa)). Asp-212 serves as the catalytic Charge relay system. N-linked (GlcNAc...) asparagine glycosylation is present at Asn-230. The active-site Charge relay system is His-243. Asn-300 is a glycosylation site (N-linked (GlcNAc...) asparagine). Ser-409 (charge relay system) is an active-site residue. N-linked (GlcNAc...) asparagine glycosylation is found at Asn-513, Asn-579, Asn-902, and Asn-954. The helical transmembrane segment at 1001 to 1021 (WIVLAGVVASGVLVLLSIWRI) threads the bilayer. The Cytoplasmic portion of the chain corresponds to 1022-1038 (RQKRGRRRRASGSNRLA).

The protein belongs to the peptidase S8 family. As to quaternary structure, interacts with PME1 and PME5. As to expression, expressed in the vasculature of roots, cotyledons and leaves.

It is found in the golgi apparatus membrane. In terms of biological role, serine protease that catalyzes the first step (site-1 cleavage) in the proteolytic activation of various factors, prior to site-2 cleavage. Part of a regulated intramembrane proteolysis (RIP) cascade. Cleaves BZIP17 and BZIP28 after the Arg-Arg-Ile-Leu (RRIL) motif. May cleave BZIP49 after the RRIL motif. Targets the membrane-associated BZIP17 factor, which functions as a stress sensor and transducer in a signaling pathway that resembles an ER stress response. Following salt stress, BZIP17 is cleaved by SBT6.1 (S1P) and S2P at the C-terminus and the N-terminal bZIP component is translocated to the nucleus, where it activates the expression of salt stress response genes. Cleaves the pectinesterases PME1 after the Arg-Arg-Leu-Met (RRLM) and Arg-Arg-Leu-Leu (RRLL) motifs, and PME5 after the Arg-Arg-Leu-Leu (RRLL) and Arg-Lys-Leu-Met (RKLM) motifs. This processing and C-terminus release occurs in the Golgi apparatus and is required for cell wall targeting of pectinesterases. Thus, SBT6.1 mediates the regulated release of mature pectinesterases from the Golgi. Cleaves the peptide growth factor RALF23 after the Arg-Arg-Ile-Leu (RRIL) motif. This processing is required for RALF23 function in the negative regulation of brassinolide (BL)-mediated signaling pathway (e.g. BL-induced hypocotyl elongation and branching limitation). The sequence is that of Subtilisin-like protease SBT6.1 from Arabidopsis thaliana (Mouse-ear cress).